Reading from the N-terminus, the 581-residue chain is Kelch-like protein 38 (581 aa).

Positions 34–101 (TDVSICSGAW…VYTGEVHISA (68 aa)) constitute a BTB domain. One can recognise a BACK domain in the interval 136–237 (CLGLVRLAEI…HPAFFHHFIA (102 aa)). Kelch repeat units lie at residues 285–332 (FLLL…TLHR), 334–383 (VYVL…THRN), 384–431 (FIFS…VKDQ), 433–479 (LYLF…VLGE), 480–521 (QIVI…VMGN), and 523–573 (LYVT…TLQC).

This chain is Kelch-like protein 38 (Klhl38), found in Mus musculus (Mouse).